The primary structure comprises 416 residues: Protein-glutamine gamma-glutamyltransferase (416 aa).

Residues 1–29 constitute a signal peptide (tat-type signal); the sequence is MHKRRRLLAFATVGAVICTAGFTPSVSQA. A propeptide spanning residues 30–85 is cleaved from the precursor; sequence ASSGDGEEKGSYAETHGLTADDVESINALNERALTLGQPGKPPKELPPSASAPSRA. The segment at 64 to 103 is disordered; the sequence is TLGQPGKPPKELPPSASAPSRAPSDDRETPPAEPLDRMPE. Positions 76–85 are enriched in low complexity; the sequence is PPSASAPSRA. Residues 86 to 103 are compositionally biased toward basic and acidic residues; sequence PSDDRETPPAEPLDRMPE. Cysteine 149 is a catalytic residue. Residues 290 to 331 form a disordered region; the sequence is GQDQRGSSDKRKYGDPEAFRPDQGTGLVDMSKDRSIPRSPAK. The span at 295–309 shows a compositional bias: basic and acidic residues; it reads GSSDKRKYGDPEAFR. Catalysis depends on residues aspartate 340 and histidine 359.

This sequence belongs to the bacterial TGase family. In terms of processing, predicted to be exported by the Tat system. The position of the signal peptide cleavage has not been experimentally proven.

The enzyme catalyses L-glutaminyl-[protein] + L-lysyl-[protein] = [protein]-L-lysyl-N(6)-5-L-glutamyl-[protein] + NH4(+). Its function is as follows. Catalyzes the cross-linking of proteins and the conjugation of polyamines to proteins. The chain is Protein-glutamine gamma-glutamyltransferase from Streptomyces cinnamoneus (Streptoverticillium cinnamoneum).